A 290-amino-acid chain; its full sequence is MSNWLVDKLIPSIMRSESQKSSVPEGLWHKCPSCEAVLYRPELEKTLDVCPKCDHHMRINARTRLDIFLDEDGREELGADLEPVDRLKFRDSKKYKDRLAAAQKDTGEKDALIAMSGKLQGMPVVACAFEFSFMGGSMGAIVGERFVRAANVALEKRCPLICFSASGGARMQEALISLMQMAKTSAVLARLREEGIPFVSVLTDPVYGGVSASLAMLGDVIVGEPKALIGFAGPRVIEQTVREKLPEGFQRSEFLLEHGAIDMIVHRAELRPRLANLLSAFTHSPSPVSA.

The CoA carboxyltransferase N-terminal domain occupies 27-290 (LWHKCPSCEA…FTHSPSPVSA (264 aa)). Zn(2+) contacts are provided by cysteine 31, cysteine 34, cysteine 50, and cysteine 53. The C4-type zinc-finger motif lies at 31 to 53 (CPSCEAVLYRPELEKTLDVCPKC).

The protein belongs to the AccD/PCCB family. In terms of assembly, acetyl-CoA carboxylase is a heterohexamer composed of biotin carboxyl carrier protein (AccB), biotin carboxylase (AccC) and two subunits each of ACCase subunit alpha (AccA) and ACCase subunit beta (AccD). Requires Zn(2+) as cofactor.

The protein localises to the cytoplasm. The enzyme catalyses N(6)-carboxybiotinyl-L-lysyl-[protein] + acetyl-CoA = N(6)-biotinyl-L-lysyl-[protein] + malonyl-CoA. Its pathway is lipid metabolism; malonyl-CoA biosynthesis; malonyl-CoA from acetyl-CoA: step 1/1. Its function is as follows. Component of the acetyl coenzyme A carboxylase (ACC) complex. Biotin carboxylase (BC) catalyzes the carboxylation of biotin on its carrier protein (BCCP) and then the CO(2) group is transferred by the transcarboxylase to acetyl-CoA to form malonyl-CoA. This is Acetyl-coenzyme A carboxylase carboxyl transferase subunit beta from Pseudomonas aeruginosa (strain UCBPP-PA14).